A 298-amino-acid polypeptide reads, in one-letter code: Probable protein phosphatase 2C 26 (298 aa).

The PPM-type phosphatase domain maps to 48-295 (SVGIHAIPHP…DDVTVIVAKV (248 aa)). Residues D82, G83, D213, and D286 each coordinate Mn(2+).

This sequence belongs to the PP2C family. Mg(2+) is required as a cofactor. It depends on Mn(2+) as a cofactor.

It catalyses the reaction O-phospho-L-seryl-[protein] + H2O = L-seryl-[protein] + phosphate. The catalysed reaction is O-phospho-L-threonyl-[protein] + H2O = L-threonyl-[protein] + phosphate. The polypeptide is Probable protein phosphatase 2C 26 (Arabidopsis thaliana (Mouse-ear cress)).